Consider the following 601-residue polypeptide: Putative Lon protease homolog (601 aa).

Residues glycine 363–arginine 560 form the Lon proteolytic domain. Catalysis depends on residues serine 455 and lysine 498.

It belongs to the peptidase S16 family.

This Haemophilus influenzae (strain ATCC 51907 / DSM 11121 / KW20 / Rd) protein is Putative Lon protease homolog.